The primary structure comprises 605 residues: Glycerophosphodiester phosphodiesterase domain-containing protein 5 (605 aa).

The Cytoplasmic segment spans residues 1-42; the sequence is MVRHQPLQYYEPQLCLSCLTGIYGCRWKRYQRSHDDTTPWER. Intrachain disulfides connect Cys-15-Cys-18 and Cys-25-Cys-571. The helical transmembrane segment at 43-63 threads the bilayer; sequence LWFLLLTFTFGLTLTWLYFWW. Residues 64–89 lie on the Extracellular side of the membrane; that stretch reads EVHNDYDEFNWYLYNRMGYWSDWPVP. A helical transmembrane segment spans residues 90-110; the sequence is ILVTTAAAFAYIAGLLVLALC. Over 111–125 the chain is Cytoplasmic; that stretch reads HIAVGQQMNLHWLHK. Residues 126 to 146 traverse the membrane as a helical segment; that stretch reads IGLVVILASTVVAMSAVAQLW. The Extracellular segment spans residues 147–160; that stretch reads EDEWEVLLISLQGT. A helical membrane pass occupies residues 161-181; the sequence is APFLHVGAVAAVTMLSWIVAG. The Cytoplasmic portion of the chain corresponds to 182 to 192; it reads QFARAERTSSQ. A helical transmembrane segment spans residues 193–213; sequence VTILCTFFTVVFALYLAPLTI. Residues 214–496 are Extracellular-facing; that stretch reads SSPCIMEKKD…PLWIMPPDEY (283 aa). In terms of domain architecture, GP-PDE spans 228-485; sequence PALIGHRGAP…DNSHALSQVP (258 aa). N-linked (GlcNAc...) asparagine glycans are attached at residues Asn-301, Asn-336, Asn-352, Asn-374, and Asn-448. A helical transmembrane segment spans residues 497–517; sequence CLMWVTADLVSFTLIVGIFVL. Residues 518 to 605 lie on the Cytoplasmic side of the membrane; it reads QKWRLGGIRS…TKTLIERSGR (88 aa). Residues 582–605 form a disordered region; that stretch reads STATPVGPRGGGSHTKTLIERSGR.

This sequence belongs to the glycerophosphoryl diester phosphodiesterase family. In terms of assembly, interacts with PRDX1; forms a mixed-disulfide with PRDX1, leading to disrupt intramolecular disulfide bond between Cys-25 and Cys-571. Intramolecular disulfide bond between Cys-25 and Cys-571 is reduced by PRDX1.

It localises to the endomembrane system. Its subcellular location is the cytoplasm. It is found in the perinuclear region. The protein resides in the cell projection. The protein localises to the growth cone. The enzyme catalyses a 1,2-diacyl-sn-glycero-3-phospho-(1D-myo-inositol-4,5-bisphosphate) + H2O = 1D-myo-inositol 1,4,5-trisphosphate + a 1,2-diacyl-sn-glycerol + H(+). It carries out the reaction sn-glycerol 3-phosphocholine + H2O = sn-glycerol 3-phosphate + choline + H(+). Its function is as follows. Glycerophosphodiester phosphodiesterase that promotes neurite formation and drives spinal motor neuron differentiation. Mediates the cleavage of glycosylphosphatidylinositol (GPI) anchor of target proteins: removes the GPI-anchor of RECK, leading to release RECK from the plasma membrane. May contribute to the osmotic regulation of cellular glycerophosphocholine. The sequence is that of Glycerophosphodiester phosphodiesterase domain-containing protein 5 from Homo sapiens (Human).